Here is a 149-residue protein sequence, read N- to C-terminus: UPF0178 protein lwe1471 (149 aa).

It belongs to the UPF0178 family.

The sequence is that of UPF0178 protein lwe1471 from Listeria welshimeri serovar 6b (strain ATCC 35897 / DSM 20650 / CCUG 15529 / CIP 8149 / NCTC 11857 / SLCC 5334 / V8).